A 188-amino-acid chain; its full sequence is MSDTTEVPRQSSENDQDNNLERTNSLKSPDVTNNIPSLFKLAAEWQINNPQETFQNHILENDVLKKINEITHLIRESYKDLSSQDGMMSKQQQEKMDWDLFCTVPVNIIEQYTKDMDEIYEKMERLAKQQRLWCESAFQIDVERCGDSILNAETWMKKKERHLEYKNIEMERSANEIKETIQRLTDDR.

2 stretches are compositionally biased toward polar residues: residues 1–13 and 21–31; these read MSDT…QSSE and ERTNSLKSPDV. The segment at 1-31 is disordered; the sequence is MSDTTEVPRQSSENDQDNNLERTNSLKSPDV.

Functionally, probable transcriptional activator involved in meiotic prophase and synaptonemal complex (SC) assembly. The sequence is that of Grand meiotic recombination cluster protein 2 (GMC2) from Saccharomyces cerevisiae (strain ATCC 204508 / S288c) (Baker's yeast).